A 530-amino-acid chain; its full sequence is Ankyrin repeat domain-containing protein 53 (530 aa).

Low complexity predominate over residues 1–15 (MASAGSTARRAGSGS). Residues 1-99 (MASAGSTARR…PSPSKESDQT (99 aa)) form a disordered region. A compositionally biased stretch (polar residues) spans 32–41 (PSGSMQQANK). ANK repeat units lie at residues 139-169 (KGFT…PVDL), 173-206 (NSQT…DLNA), and 210-239 (NGST…NVHA). 2 disordered regions span residues 323–360 (GHSL…VDAR) and 383–402 (PTMW…QISH). Composition is skewed to polar residues over residues 326–341 (LVSN…LSKT) and 386–402 (WNVS…QISH).

As to quaternary structure, interacts with PSRC1; recruited by PSRC1 to the spindle during mitosis. Post-translationally, phosphorylated during mitosis.

It localises to the cytoplasm. Its subcellular location is the cytoskeleton. The protein resides in the spindle. It is found in the spindle pole. Required for normal progression through mitosis. Involved in chromosome alignment and cytokinesis via regulation of microtubules polymerization. The sequence is that of Ankyrin repeat domain-containing protein 53 (ANKRD53) from Homo sapiens (Human).